We begin with the raw amino-acid sequence, 500 residues long: Glutathione gamma-glutamylcysteinyltransferase 1 (500 aa).

In terms of domain architecture, Peptidase C83 spans 1–221 (MEVASLYRRV…GFMLVSRRSS (221 aa)). Residues Cys-56, His-162, and Asp-180 contribute to the active site.

This sequence belongs to the phytochelatin synthase family. In terms of tissue distribution, expressed in roots and shoots.

It catalyses the reaction [Glu(-Cys)](n)-Gly + glutathione + H(+) = [Glu(-Cys)](n+1)-Gly + glycine. With respect to regulation, requires cadmium for activity. Involved in the synthesis of phytochelatins (PC) and homophytochelatins (hPC), the heavy-metal-binding peptides of plants. The protein is Glutathione gamma-glutamylcysteinyltransferase 1 (PCS1) of Triticum aestivum (Wheat).